The chain runs to 515 residues: Brahma-associated protein of 60 kDa (515 aa).

A disordered region spans residues 1–124 (MSQRFAPGQA…GGSKSDFATA (124 aa)). Positions 17 to 34 (QPPPPAPGMRPYPPPGAS) are enriched in pro residues. Residues 49-62 (PVPGTANVAGVPGV) are compositionally biased toward low complexity. A compositionally biased stretch (gly residues) spans 90–103 (TGAGGGGVGSGGGS). The segment at 116-204 (GSKSDFATAK…SKEPTNDGEE (89 aa)) is DNA-binding. The region spanning 291-368 (YQPLQFKLDP…PQRLNPLLHP (78 aa)) is the SWIB/MDM2 domain.

In terms of assembly, there are 2 distinct Brahma complexes in the fruit fly, the Brahma-associated proteins (BAP) and Polybromo-containing BAP (PBAP) complexes, which are composed of common subunits Brm, Mor, Snr1/Bap45, Bap111/Dalo, Bap55, Bap60 and Act42A/Bap47, and additional signature subunits osa in the BAP complex and Polybromo and Bap170 in the PBAP complex. Interacts with sisA and sc. Interacts with mor. Interacts with p53. Interacts with erm (via N-terminal). Interacts with akirin; interaction is immune stimulation-dependent; activates selected Rel target gene promoters.

Its function is as follows. Involved in the recruitment and site-specific anchoring of the Brahma complex at specific promoter sites. The Brahma complex is a multiprotein complex which is the equivalent of the yeast SWI/SNF complex and acts by remodeling the chromatin by catalyzing an ATP-dependent alteration in the structure of nucleosomal DNA. This complex can both serve as a transcriptional coactivator or corepressor, depending on the context. Participates in X-chromosomal dosage compensation. Participates in neurogenesis. In Drosophila melanogaster (Fruit fly), this protein is Brahma-associated protein of 60 kDa (Bap60).